The following is a 336-amino-acid chain: NADH-quinone oxidoreductase subunit H (336 aa).

8 helical membrane passes run 4 to 24 (YILW…LVVA), 75 to 95 (YLFF…WAVI), 108 to 128 (LGLL…VIAG), 154 to 174 (MGFA…TGII), 181 to 201 (IWHW…IAGI), 233 to 253 (LFFL…SIMF), 272 to 292 (FVPG…MFLW), and 308 to 328 (LGWK…ACMV).

The protein belongs to the complex I subunit 1 family. NDH-1 is composed of 14 different subunits. Subunits NuoA, H, J, K, L, M, N constitute the membrane sector of the complex.

The protein resides in the cell inner membrane. It catalyses the reaction a quinone + NADH + 5 H(+)(in) = a quinol + NAD(+) + 4 H(+)(out). Functionally, NDH-1 shuttles electrons from NADH, via FMN and iron-sulfur (Fe-S) centers, to quinones in the respiratory chain. The immediate electron acceptor for the enzyme in this species is believed to be ubiquinone. Couples the redox reaction to proton translocation (for every two electrons transferred, four hydrogen ions are translocated across the cytoplasmic membrane), and thus conserves the redox energy in a proton gradient. This subunit may bind ubiquinone. This chain is NADH-quinone oxidoreductase subunit H, found in Francisella tularensis subsp. mediasiatica (strain FSC147).